A 63-amino-acid chain; its full sequence is Large ribosomal subunit protein uL29 (63 aa).

The protein belongs to the universal ribosomal protein uL29 family.

The polypeptide is Large ribosomal subunit protein uL29 (Aliivibrio fischeri (strain ATCC 700601 / ES114) (Vibrio fischeri)).